Consider the following 498-residue polypeptide: Cytochrome P450 71B31 (498 aa).

Residues 3 to 23 (MFLGLLFLFPLFFILFKNLLP) form a helical membrane-spanning segment. Heme is bound at residue Cys441.

It belongs to the cytochrome P450 family. It depends on heme as a cofactor.

The protein resides in the membrane. The chain is Cytochrome P450 71B31 (CYP71B31) from Arabidopsis thaliana (Mouse-ear cress).